The sequence spans 287 residues: MTFSQMILNLQNYWQEQGCAIMQPYDMPAGAGTFHPATFLRSLGKKPWAAAYVAPSRRPTDGRYGENPNRLGAYYQFQVLIKPSPDNIQELYLKSLENLGFDLKSHDIRFVEDNWESPSLGAWGLGWEVWLDGMEVTQFTYFQQVGGIAVDLVSAEITYGLERIAMYLQNVDNVYDIVWSEFNGEKIKYADVHKQSEYEFSKYNFEVSDVKILNEQFENSYKECKNILEQGLALPAYDYCMLAAHTFNLLDARGAISVAQRQDYMLKIRELSKNCAEIYKKNLNETE.

It belongs to the class-II aminoacyl-tRNA synthetase family. Tetramer of two alpha and two beta subunits.

Its subcellular location is the cytoplasm. The enzyme catalyses tRNA(Gly) + glycine + ATP = glycyl-tRNA(Gly) + AMP + diphosphate. This chain is Glycine--tRNA ligase alpha subunit, found in Campylobacter jejuni subsp. jejuni serotype O:6 (strain 81116 / NCTC 11828).